The chain runs to 493 residues: Tripartite motif-containing protein 5 (493 aa).

Ala2 bears the N-acetylalanine mark. The RING-type zinc-finger motif lies at 15-59 (CPICLELLTQPLSLDCGHSFCQACLTANHKKSMLDKGESSCPVCR). Ser86 carries the phosphoserine modification. The B box-type zinc-finger motif lies at 90-132 (QKVDHCARHGEKLLLFCQEDGKVICWLCERSQEHRGHHTFLTE). The Zn(2+) site is built by Cys95, His98, Cys117, and His123. Positions 130–241 (LTEEVAREYQ…ISDLEHRLQG (112 aa)) form a coiled coil. Positions 185 to 198 (FEQLRDILDWEESN) are required for interaction with GABARAP and for autophagy. The 213-residue stretch at 281–493 (LKGMLEVFRE…VPMTLCSPSS (213 aa)) folds into the B30.2/SPRY domain.

This sequence belongs to the TRIM/RBCC family. In terms of assembly, can form homodimers and homotrimers. In addition to lower-order dimerization, also exhibits a higher-order multimerization and both low- and high-order multimerizations are essential for its restriction activity. Isoform Delta interacts with BTBD1 and BTBD2. Interacts with PSMC4, PSMC5, PSMD7 and HSPA8/HSC70. Interacts (via B30.2/SPRY domain) with HSPA1A/B. Interacts with PSMC2, MAP3K7/TAK1, TAB2 and TAB3. Interacts with SQSTM1. Interacts with TRIM6 and TRIM34. Interacts with ULK1 (phosphorylated form), GABARAP, GABARAPL1, GABARAPL2, MAP1LC3A, MAP1LC3C and BECN1. In terms of processing, degraded in a proteasome-independent fashion in the absence of viral infection but in a proteasome-dependent fashion following exposure to restriction sensitive virus. Post-translationally, autoubiquitinated in a RING finger- and UBE2D2-dependent manner. Monoubiquitinated by TRIM21. Deubiquitinated by Yersinia YopJ. Ubiquitination may not lead to proteasomal degradation.

The protein localises to the cytoplasm. Its subcellular location is the nucleus. The catalysed reaction is S-ubiquitinyl-[E2 ubiquitin-conjugating enzyme]-L-cysteine + [acceptor protein]-L-lysine = [E2 ubiquitin-conjugating enzyme]-L-cysteine + N(6)-ubiquitinyl-[acceptor protein]-L-lysine.. It functions in the pathway protein modification; protein ubiquitination. Functionally, capsid-specific restriction factor that prevents infection from non-host-adapted retroviruses. Blocks viral replication early in the life cycle, after viral entry but before reverse transcription. In addition to acting as a capsid-specific restriction factor, also acts as a pattern recognition receptor that activates innate immune signaling in response to the retroviral capsid lattice. Binding to the viral capsid triggers its E3 ubiquitin ligase activity, and in concert with the heterodimeric ubiquitin conjugating enzyme complex UBE2V1-UBE2N (also known as UBC13-UEV1A complex) generates 'Lys-63'-linked polyubiquitin chains, which in turn are catalysts in the autophosphorylation of the MAP3K7/TAK1 complex (includes TAK1, TAB2, and TAB3). Activation of the MAP3K7/TAK1 complex by autophosphorylation results in the induction and expression of NF-kappa-B and MAPK-responsive inflammatory genes, thereby leading to an innate immune response in the infected cell. Restricts infection by N-tropic murine leukemia virus (N-MLV), equine infectious anemia virus (EIAV), simian immunodeficiency virus of macaques (SIVmac), feline immunodeficiency virus (FIV), and bovine immunodeficiency virus (BIV). Plays a role in regulating autophagy through activation of autophagy regulator BECN1 by causing its dissociation from its inhibitors BCL2 and TAB2. Also plays a role in autophagy by acting as a selective autophagy receptor which recognizes and targets HIV-1 capsid protein p24 for autophagic destruction. In Homo sapiens (Human), this protein is Tripartite motif-containing protein 5 (TRIM5).